The following is a 492-amino-acid chain: Protein nucleotidyltransferase YdiU (492 aa).

ATP contacts are provided by G101, G103, R104, K124, D136, G137, R187, and R194. D268 acts as the Proton acceptor in catalysis. Positions 269 and 278 each coordinate Mg(2+). D278 provides a ligand contact to ATP.

This sequence belongs to the SELO family. Mg(2+) is required as a cofactor. It depends on Mn(2+) as a cofactor.

It catalyses the reaction L-seryl-[protein] + ATP = 3-O-(5'-adenylyl)-L-seryl-[protein] + diphosphate. It carries out the reaction L-threonyl-[protein] + ATP = 3-O-(5'-adenylyl)-L-threonyl-[protein] + diphosphate. The enzyme catalyses L-tyrosyl-[protein] + ATP = O-(5'-adenylyl)-L-tyrosyl-[protein] + diphosphate. The catalysed reaction is L-histidyl-[protein] + UTP = N(tele)-(5'-uridylyl)-L-histidyl-[protein] + diphosphate. It catalyses the reaction L-seryl-[protein] + UTP = O-(5'-uridylyl)-L-seryl-[protein] + diphosphate. It carries out the reaction L-tyrosyl-[protein] + UTP = O-(5'-uridylyl)-L-tyrosyl-[protein] + diphosphate. Its function is as follows. Nucleotidyltransferase involved in the post-translational modification of proteins. It can catalyze the addition of adenosine monophosphate (AMP) or uridine monophosphate (UMP) to a protein, resulting in modifications known as AMPylation and UMPylation. The chain is Protein nucleotidyltransferase YdiU from Corynebacterium efficiens (strain DSM 44549 / YS-314 / AJ 12310 / JCM 11189 / NBRC 100395).